The primary structure comprises 222 residues: Large ribosomal subunit protein uL4 (222 aa).

Residues 50 to 72 form a disordered region; sequence TRGRSEVSHSTRKPFRQKGTGNA.

This sequence belongs to the universal ribosomal protein uL4 family. In terms of assembly, part of the 50S ribosomal subunit.

Functionally, one of the primary rRNA binding proteins, this protein initially binds near the 5'-end of the 23S rRNA. It is important during the early stages of 50S assembly. It makes multiple contacts with different domains of the 23S rRNA in the assembled 50S subunit and ribosome. Forms part of the polypeptide exit tunnel. This is Large ribosomal subunit protein uL4 from Chlamydia muridarum (strain MoPn / Nigg).